Consider the following 490-residue polypeptide: Betaine aldehyde dehydrogenase (490 aa).

Isoleucine 27 and aspartate 93 together coordinate K(+). Residue 150 to 152 (GAW) participates in NAD(+) binding. Lysine 162 functions as the Charge relay system in the catalytic mechanism. 176–179 (KPSE) contacts NAD(+). Valine 180 is a binding site for K(+). 230 to 233 (GTTT) is an NAD(+) binding site. Leucine 246 contributes to the K(+) binding site. The active-site Proton acceptor is the glutamate 252. NAD(+)-binding residues include glycine 254, cysteine 286, and glutamate 387. The Nucleophile role is filled by cysteine 286. Cysteine 286 carries the post-translational modification Cysteine sulfenic acid (-SOH). K(+) contacts are provided by lysine 457 and glycine 460. Glutamate 464 (charge relay system) is an active-site residue.

This sequence belongs to the aldehyde dehydrogenase family. As to quaternary structure, dimer of dimers. K(+) is required as a cofactor.

It catalyses the reaction betaine aldehyde + NAD(+) + H2O = glycine betaine + NADH + 2 H(+). The protein operates within amine and polyamine biosynthesis; betaine biosynthesis via choline pathway; betaine from betaine aldehyde: step 1/1. Its function is as follows. Involved in the biosynthesis of the osmoprotectant glycine betaine. Catalyzes the irreversible oxidation of betaine aldehyde to the corresponding acid. The chain is Betaine aldehyde dehydrogenase from Pseudomonas entomophila (strain L48).